The sequence spans 182 residues: Transcription repressor OFP11 (182 aa).

Positions 62–94 are disordered; the sequence is PLHRRHSSENPAGVFSTNRREEEEEDETTTSVS. In terms of domain architecture, OVATE spans 104-169; sequence MKHIESPDPY…VSAFADTLLW (66 aa).

In terms of tissue distribution, expressed in roots, rosette and cauline leaves, shoots, stems, flower buds and siliques.

It localises to the nucleus. Transcriptional repressor that may regulate multiple aspects of plant growth and development through the regulation of BEL1-LIKE (BLH) and KNOX TALE (KNAT) homeodomain transcription factors. This chain is Transcription repressor OFP11 (OFP11), found in Arabidopsis thaliana (Mouse-ear cress).